Here is a 1657-residue protein sequence, read N- to C-terminus: Putative serine/threonine-protein kinase/receptor R826 (1657 aa).

Residues M1–C23 form the signal peptide. Residues N153, N178, N238, N255, N352, N454, N476, N494, and N596 are each glycosylated (N-linked (GlcNAc...) asparagine; by host). Residues I742 to V762 form a helical membrane-spanning segment. Residues L786–M1049 enclose the Protein kinase 1 domain. Residues L792–V800 and K813 contribute to the ATP site. D909 serves as the catalytic Proton acceptor. Residues V1089–N1115 form a disordered region. The region spanning V1134–T1277 is the Guanylate cyclase domain. A Protein kinase 2 domain is found at I1399–F1651. ATP-binding positions include I1405–V1413 and K1426. Catalysis depends on D1522, which acts as the Proton acceptor.

The protein localises to the membrane. The enzyme catalyses L-seryl-[protein] + ATP = O-phospho-L-seryl-[protein] + ADP + H(+). The catalysed reaction is L-threonyl-[protein] + ATP = O-phospho-L-threonyl-[protein] + ADP + H(+). This chain is Putative serine/threonine-protein kinase/receptor R826, found in Acanthamoeba polyphaga mimivirus (APMV).